The chain runs to 529 residues: Glutamyl-tRNA reductase (529 aa).

A substrate-binding site is contributed by 47–50; it reads TCNR. The active-site Nucleophile is Cys-48. The tract at residues 56–80 is disordered; it reads SPRQQAPAPPRPGSAPPPSDEELSR. The span at 62–73 shows a compositional bias: pro residues; sequence PAPPRPGSAPPP. Residues Ser-125, 130–132, and Gln-136 contribute to the substrate site; that span reads EPQ. 205–210 is a binding site for NADP(+); it reads GAGDMA. Residues 454 to 505 form a disordered region; sequence RGAVDGPPTPRSARGAAPPASGARGGGSPRHADPRPQAAEDNGVYARQPGGR. The segment covering 464–475 has biased composition (low complexity); sequence RSARGAAPPASG.

It belongs to the glutamyl-tRNA reductase family. As to quaternary structure, homodimer.

It carries out the reaction (S)-4-amino-5-oxopentanoate + tRNA(Glu) + NADP(+) = L-glutamyl-tRNA(Glu) + NADPH + H(+). Its pathway is porphyrin-containing compound metabolism; protoporphyrin-IX biosynthesis; 5-aminolevulinate from L-glutamyl-tRNA(Glu): step 1/2. Its function is as follows. Catalyzes the NADPH-dependent reduction of glutamyl-tRNA(Glu) to glutamate 1-semialdehyde (GSA). This Sorangium cellulosum (strain So ce56) (Polyangium cellulosum (strain So ce56)) protein is Glutamyl-tRNA reductase.